The following is a 676-amino-acid chain: Probable potassium transport system protein Kup (676 aa).

The next 12 helical transmembrane spans lie at 14–34, 56–76, 97–117, 142–162, 173–193, 219–239, 252–272, 296–316, 345–365, 376–396, 402–422, and 429–449; these read GLLIAIGIVYGDIGTSPLYVM, ISLILWTVTLLTTVQTVIIAL, AAWLVWPALIGGAAILADGTL, VSNQTTVLVITIVILLVLFSI, AFGPIMLVWFAFLGVMGLINI, AGFAILGSIFLATTGAEALYS, SWPFVFVCLSLNYFGQGVWIL, LASIVLATLAAIIASQALITG, IYIPAVNKMLGITTIALVLFF, GLSITISMLTTTILLYEWLVL, LANLLFVIFFSTINILFMGSS, and GGYVSLLITLLIASVMVVWYF.

It belongs to the HAK/KUP transporter (TC 2.A.72) family.

The protein resides in the cell membrane. The catalysed reaction is K(+)(in) + H(+)(in) = K(+)(out) + H(+)(out). Its function is as follows. Transport of potassium into the cell. Likely operates as a K(+):H(+) symporter. This chain is Probable potassium transport system protein Kup, found in Lactobacillus delbrueckii subsp. bulgaricus (strain ATCC BAA-365 / Lb-18).